The sequence spans 172 residues: uncharacterized protein (172 aa).

The PfpI endopeptidase domain maps to 3 to 171 (KKVAIILADE…FNREIVKKLE (169 aa)).

This sequence belongs to the peptidase C56 family.

This is an uncharacterized protein from Staphylococcus epidermidis (strain ATCC 35984 / DSM 28319 / BCRC 17069 / CCUG 31568 / BM 3577 / RP62A).